A 455-amino-acid polypeptide reads, in one-letter code: Nuclear mRNA export protein THP1 (455 aa).

A PCI domain is found at Ile220–Met431.

Heterodimer with THP1. The SAC3-THP1 complex interacts with CDC31 and SUS1, and with the mRNA export factor MEX67-MTR2, the TREX complex component SUB2, and the nucleoporin NUP1.

The protein localises to the nucleus envelope. Its function is as follows. Component of the SAC3-THP1 complex, which functions in transcription-coupled mRNA export from the nucleus to the cytoplasm. SAC3-THP1 functions in docking export-competent ribonucleoprotein particles (mRNPs) to the nuclear entrance of the nuclear pore complex (nuclear basket), by association with components of the nuclear mRNA export machinery (MEX67-MTR2 and SUB2) in the nucleoplasm and the nucleoporin NUP1 at the nuclear basket. THP1 binds to RNA in vitro. In Saccharomyces cerevisiae (strain ATCC 204508 / S288c) (Baker's yeast), this protein is Nuclear mRNA export protein THP1 (THP1).